Here is a 711-residue protein sequence, read N- to C-terminus: Origin recognition complex subunit 3 (711 aa).

Residues serine 23 and serine 516 each carry the phosphoserine modification.

This sequence belongs to the ORC3 family. Component of ORC, a complex composed of at least 6 subunits: ORC1, ORC2, ORC3, ORC4, ORC5 and ORC6. ORC is regulated in a cell-cycle dependent manner. It is sequentially assembled at the exit from anaphase of mitosis and disassembled as cells enter S phase. In terms of processing, multi-mono-ubiquitinated by OBI1; ubiquitination is important for efficient DNA replication origin site activation. Ubiquitination levels are low in mitotic and early G1-phAse cells and are induced in late G1-/early S-phase, peaking in S-phase and decrease toward the end of the cell cycle.

It localises to the nucleus. It is found in the chromosome. In terms of biological role, component of the origin recognition complex (ORC) that binds origins of replication. DNA-binding is ATP-dependent. The specific DNA sequences that define origins of replication have not been identified yet. ORC is required to assemble the pre-replication complex necessary to initiate DNA replication. Binds histone H3 and H4 trimethylation marks H3K9me3, H3K27me3 and H4K20me3. This is Origin recognition complex subunit 3 (ORC3) from Homo sapiens (Human).